The primary structure comprises 186 residues: Protein YABBY 2 (186 aa).

A C4-type zinc finger spans residues 17-44 (CNFCNTIFAVSVPSNSMLNIVTVRCGHC).

The protein belongs to the YABBY family. In terms of tissue distribution, expressed in leaf blades, leaf sheaths and flowers.

The protein resides in the nucleus. The protein is Protein YABBY 2 (YAB2) of Oryza sativa subsp. japonica (Rice).